The chain runs to 376 residues: Actin-related protein T1 (376 aa).

It belongs to the actin family.

It localises to the cytoplasm. The protein resides in the cytoskeleton. Its subcellular location is the nucleus. It is found in the cytoplasmic vesicle. The protein localises to the secretory vesicle. It localises to the acrosome. Its function is as follows. Negatively regulates the Hedgehog (SHH) signaling. Binds to the promoter of the SHH signaling mediator, GLI1, and inhibits its expression. This Mus musculus (Mouse) protein is Actin-related protein T1 (Actrt1).